Reading from the N-terminus, the 335-residue chain is Zinc finger protein CO3 (335 aa).

Residues Cys15, Cys18, Cys38, and His43 each coordinate Zn(2+). The B box-type; atypical zinc-finger motif lies at 15–57 (CDSCRSAPCAFYCLADSAALCATCDADVHSVNPLARRHRRVPM). The disordered stretch occupies residues 141–179 (AGEKEDASSSKDCSSSHGKSSEGSHEFAVPGEPVPERQG). The region spanning 268–310 (REARVHRYREKRKTRRFEKTIRYASRKAYAETRPRIKGRFAKR) is the CCT domain.

This sequence belongs to the CONSTANS family.

Its subcellular location is the nucleus. Probable transcription factor involved in the regulation of flowering time under short day (SD) conditions. Functions as a repressor of flowering under SD conditions, independently of HD1, EHD1, MADS50 and MADS51. Controls flowering time under SD conditions by negatively regulating the expression of HD3A and FTL. The protein is Zinc finger protein CO3 of Oryza sativa subsp. japonica (Rice).